The chain runs to 533 residues: Glucosidase 2 subunit beta (533 aa).

The first 13 residues, 1–13 (MLLLLLLLPMCWA), serve as a signal peptide directing secretion. Ser23 carries the post-translational modification Phosphoserine. LDL-receptor class A domains follow at residues 36–70 (FTCL…AACP) and 71–112 (NGSF…IVCE). 2 cysteine pairs are disulfide-bonded: Cys38–Cys57 and Cys55–Cys69. Asp48 is a substrate binding site. The Ca(2+) site is built by Gln49, Asp52, Tyr54, Asp56, Asp62, and Glu63. Position 52 (Asp52) interacts with substrate. An N-linked (GlcNAc...) asparagine glycan is attached at Asn71. Intrachain disulfides connect Cys76–Cys98, Cys96–Cys111, and Cys99–Cys115. Ser88 carries the post-translational modification Phosphoserine; by PKC. Ca(2+)-binding residues include Asp93, Val95, Asp97, Asp103, and Glu104. Lys165 carries the N6-succinyllysine modification. Ser167 carries the post-translational modification Phosphoserine. EF-hand domains lie at 208-243 (RERE…DTDG) and 244-279 (DGAL…RDKY). The Ca(2+) site is built by Asp221, Asp223, Asp225, and Glu232. A disordered region spans residues 284-363 (LPTEYPPSPP…SPTEEDRMPP (80 aa)). The span at 312–336 (TEEEDEDEEDEETEEDEDEEDEDSQ) shows a compositional bias: acidic residues. A phosphoserine; by PKC mark is found at Ser388 and Ser395. Residues 418–519 (SQCYELTTNE…ELMTPAACPE (102 aa)) enclose the MRH domain. An intrachain disulfide couples Cys420 to Cys433. Position 439 is a phosphoserine; by PKC (Ser439). Cystine bridges form between Cys476–Cys505 and Cys490–Cys517. An N-linked (GlcNAc...) asparagine glycan is attached at Asn481. The short motif at 530 to 533 (HDEL) is the Prevents secretion from ER element.

Heterodimer of a catalytic alpha subunit (GANAB) and a beta subunit (PRKCSH). Binds glycosylated PTPRC. As to expression, ubiquitous. Highly expressed in liver, spleen, lung, duodenum, stomach, adrenal gland, pituitary, testis, corpus luteum, uterus and fetal ovary.

Its subcellular location is the endoplasmic reticulum. It participates in glycan metabolism; N-glycan metabolism. In terms of biological role, regulatory subunit of glucosidase II that cleaves sequentially the 2 innermost alpha-1,3-linked glucose residues from the Glc(2)Man(9)GlcNAc(2) oligosaccharide precursor of immature glycoproteins. Required for efficient PKD1/Polycystin-1 biogenesis and trafficking to the plasma membrane of the primary cilia. The protein is Glucosidase 2 subunit beta (PRKCSH) of Bos taurus (Bovine).